We begin with the raw amino-acid sequence, 561 residues long: MCGIWALFGSDDCLSVQCLSAMKIAHRGPDAFRFENVNGYTNCCFGFHRLAVVDPLFGMQPIRVRKYPYLWLCYNGEIYNHKALQQRFEFEYQTNVDGEIILHLYDKGGIEKTICMLDGVFAFILLDTANKKVFLGRDTYGVRPLFKALTEDGFLAVCSEAKGLVSLKHSTTPFLKVEPFLPGHYEVLDLKPNGKVASVEMVKYHHCTDEPLHAIYDSVEKLFPGFEIETVKNNLRILFNNAIKKRLMTDRRIGCLLSGGLDSSLVAASLLKQLKEAQVPYALQTFAIGMEDSPDLLAARKVANYIGSEHHEVLFNSEEGIQSLDEVIFSLETYDITTVRASVGMYLISKYIRKNTDSVVIFSGEGSDELTQGYIYFHKAPSPEKAEEESERLLKELYLFDVLRADRTTAAHGLELRVPFLDHRFSSYYLSLPPEMRIPKDGIEKHLLRETFEDSNLLPKEILWRPKEAFSDGITSVKNSWFKILQDFVEHQVDDAMMSEASQKFPFNTPQTKEGYYYRQIFEHHYPGRADWLTHYWMPKWINATDPSARTLTHYKSTAKA.

The active-site For GATase activity is Cys-2. The region spanning 2–191 (CGIWALFGSD…PGHYEVLDLK (190 aa)) is the Glutamine amidotransferase type-2 domain. L-glutamine is bound by residues 49–53 (RLAVV), 75–77 (NGE), and Asp-97. In terms of domain architecture, Asparagine synthetase spans 213-536 (HAIYDSVEKL…PGRADWLTHY (324 aa)). ATP is bound by residues Leu-256, Ile-288, and 363–364 (SG). An N6-acetyllysine modification is found at Lys-385. At Thr-545 the chain carries Phosphothreonine. Ser-557 is subject to Phosphoserine.

The enzyme catalyses L-aspartate + L-glutamine + ATP + H2O = L-asparagine + L-glutamate + AMP + diphosphate + H(+). It functions in the pathway amino-acid biosynthesis; L-asparagine biosynthesis; L-asparagine from L-aspartate (L-Gln route): step 1/1. The polypeptide is Asparagine synthetase [glutamine-hydrolyzing] (Asns) (Rattus norvegicus (Rat)).